The chain runs to 116 residues: Large ribosomal subunit protein uL18 (116 aa).

It belongs to the universal ribosomal protein uL18 family. In terms of assembly, part of the 50S ribosomal subunit; part of the 5S rRNA/L5/L18/L25 subcomplex. Contacts the 5S and 23S rRNAs.

This is one of the proteins that bind and probably mediate the attachment of the 5S RNA into the large ribosomal subunit, where it forms part of the central protuberance. The polypeptide is Large ribosomal subunit protein uL18 (Mycoplasma capricolum subsp. capricolum (strain California kid / ATCC 27343 / NCTC 10154)).